Here is a 515-residue protein sequence, read N- to C-terminus: Maturase K (515 aa).

It belongs to the intron maturase 2 family. MatK subfamily.

The protein resides in the plastid. Its subcellular location is the chloroplast. Functionally, usually encoded in the trnK tRNA gene intron. Probably assists in splicing its own and other chloroplast group II introns. In Pinus elliottii (Slash pine), this protein is Maturase K.